The chain runs to 251 residues: Cell division protein ZapD (251 aa).

It belongs to the ZapD family. In terms of assembly, interacts with FtsZ.

It localises to the cytoplasm. In terms of biological role, cell division factor that enhances FtsZ-ring assembly. Directly interacts with FtsZ and promotes bundling of FtsZ protofilaments, with a reduction in FtsZ GTPase activity. This is Cell division protein ZapD from Burkholderia thailandensis (strain ATCC 700388 / DSM 13276 / CCUG 48851 / CIP 106301 / E264).